The sequence spans 152 residues: UPF0266 membrane protein YobD (152 aa).

Transmembrane regions (helical) follow at residues leucine 6–methionine 26, isoleucine 45–histidine 65, and alanine 67–isoleucine 87.

It belongs to the UPF0266 family.

The protein resides in the cell inner membrane. This is UPF0266 membrane protein YobD from Escherichia fergusonii (strain ATCC 35469 / DSM 13698 / CCUG 18766 / IAM 14443 / JCM 21226 / LMG 7866 / NBRC 102419 / NCTC 12128 / CDC 0568-73).